Here is a 258-residue protein sequence, read N- to C-terminus: Shikimate dehydrogenase (NADP(+)) (258 aa).

Residues serine 14 to serine 16 and threonine 61 contribute to the shikimate site. Lysine 65 functions as the Proton acceptor in the catalytic mechanism. Residues asparagine 86 and aspartate 101 each coordinate shikimate. NADP(+) contacts are provided by residues glycine 125–serine 129 and leucine 211. Tyrosine 213 lines the shikimate pocket. Glycine 234 provides a ligand contact to NADP(+).

This sequence belongs to the shikimate dehydrogenase family. In terms of assembly, homodimer.

The enzyme catalyses shikimate + NADP(+) = 3-dehydroshikimate + NADPH + H(+). Its pathway is metabolic intermediate biosynthesis; chorismate biosynthesis; chorismate from D-erythrose 4-phosphate and phosphoenolpyruvate: step 4/7. Its function is as follows. Involved in the biosynthesis of the chorismate, which leads to the biosynthesis of aromatic amino acids. Catalyzes the reversible NADPH linked reduction of 3-dehydroshikimate (DHSA) to yield shikimate (SA). This Clostridium botulinum (strain ATCC 19397 / Type A) protein is Shikimate dehydrogenase (NADP(+)).